The following is a 697-amino-acid chain: Disintegrin and metalloproteinase domain-containing protein 26A (697 aa).

The N-terminal stretch at 1-22 (MFLKFCLWTMFFFSAWSPIGHA) is a signal peptide. Positions 23–187 (KYSSLLEVVT…NAPTLLQIPY (165 aa)) are excised as a propeptide. The N-linked (GlcNAc...) asparagine glycan is linked to Asn-127. Residues 159 to 166 (MRCGLSEE) carry the Cysteine switch motif. Cys-161 is a binding site for Zn(2+). Over 188 to 671 (ENWWTHHRFI…PPLPLSHSKW (484 aa)) the chain is Extracellular. A Peptidase M12B domain is found at 195 to 385 (RFIEYFVVLD…TKRSCLYDIP (191 aa)). N-linked (GlcNAc...) asparagine glycosylation occurs at Asn-214. 3 cysteine pairs are disulfide-bonded: Cys-305/Cys-380, Cys-344/Cys-366, and Cys-346/Cys-351. His-329 provides a ligand contact to Zn(2+). Residue Glu-330 is part of the active site. Zn(2+) is bound by residues His-333 and His-339. 6 N-linked (GlcNAc...) asparagine glycosylation sites follow: Asn-365, Asn-391, Asn-464, Asn-506, Asn-531, and Asn-573. In terms of domain architecture, Disintegrin spans 392-478 (LTVCGNKVVE…ECPGDVYKAD (87 aa)). Cysteines 450 and 470 form a disulfide. One can recognise an EGF-like domain in the interval 616–649 (LVSNCSPQLYHMQGICNNKQHCHCGVTWKPPDCQ). Disulfide bonds link Cys-620/Cys-631 and Cys-639/Cys-648. Residues 672-692 (IVYILIVLDVCIVIIIYLFSF) traverse the membrane as a helical segment. Topologically, residues 693–697 (YKLSK) are cytoplasmic.

The cofactor is Zn(2+). Expressed in sperm (at protein level). Expressed specifically in testis.

Its subcellular location is the membrane. Its function is as follows. Sperm surface membrane protein that may be involved in spermatogenesis and fertilization. This chain is Disintegrin and metalloproteinase domain-containing protein 26A, found in Mus musculus (Mouse).